A 123-amino-acid polypeptide reads, in one-letter code: Small ribosomal subunit protein uS13 (123 aa).

Residues 89–123 (GRRHRSGLPVRGQRTRTNARTRKGKRKAVAKKKAK) are disordered. The span at 101-123 (QRTRTNARTRKGKRKAVAKKKAK) shows a compositional bias: basic residues.

The protein belongs to the universal ribosomal protein uS13 family. In terms of assembly, part of the 30S ribosomal subunit. Forms a loose heterodimer with protein S19. Forms two bridges to the 50S subunit in the 70S ribosome.

In terms of biological role, located at the top of the head of the 30S subunit, it contacts several helices of the 16S rRNA. In the 70S ribosome it contacts the 23S rRNA (bridge B1a) and protein L5 of the 50S subunit (bridge B1b), connecting the 2 subunits; these bridges are implicated in subunit movement. Contacts the tRNAs in the A and P-sites. In Cutibacterium acnes (strain DSM 16379 / KPA171202) (Propionibacterium acnes), this protein is Small ribosomal subunit protein uS13.